We begin with the raw amino-acid sequence, 388 residues long: MNLHEYQGKQIFAKYKLPVSQGIACKTADEAVEAIKQLKGDAWAIKCQVHAGGRGKAGGVKLVRNEAEVREFADKWLGKRLVTFQTDANGQPVNTLYVEETAGIARELYLGAVIDRSSQKVVFMASSAGGMNIEEVAAKTPELLHKVAIDPLVGGMAYQGRELAFKLGLTGDQIKQFSFIFTQLAKLFVEKDLSLLEINPLVVTTEGNLLCLDAKMVVDGNALYRQPELAAMHDPSQDDPREALAESHQLNYVALDGNIGCMVNGAGLAMGTMDIVKLHGGFPANFLDVGGGATKERVAEAFKIILSDKAVKAVLVNIFGGIVRCDLIADGIIAAVNEVGVNVPVVVRLEGNNAELGREILAKSGLNIIAAATLTDAAVEAVKAAGGK.

One can recognise an ATP-grasp domain in the interval 9–244; the sequence is KQIFAKYKLP…PSQDDPREAL (236 aa). ATP contacts are provided by residues Lys-46, 53–55, Glu-99, Ala-102, and Glu-107; that span reads GRG. 2 residues coordinate Mg(2+): Asn-199 and Asp-213. Residues Asn-264 and 321 to 323 contribute to the substrate site; that span reads GIV.

This sequence belongs to the succinate/malate CoA ligase beta subunit family. Heterotetramer of two alpha and two beta subunits. Requires Mg(2+) as cofactor.

It catalyses the reaction succinate + ATP + CoA = succinyl-CoA + ADP + phosphate. It carries out the reaction GTP + succinate + CoA = succinyl-CoA + GDP + phosphate. It participates in carbohydrate metabolism; tricarboxylic acid cycle; succinate from succinyl-CoA (ligase route): step 1/1. Succinyl-CoA synthetase functions in the citric acid cycle (TCA), coupling the hydrolysis of succinyl-CoA to the synthesis of either ATP or GTP and thus represents the only step of substrate-level phosphorylation in the TCA. The beta subunit provides nucleotide specificity of the enzyme and binds the substrate succinate, while the binding sites for coenzyme A and phosphate are found in the alpha subunit. The chain is Succinate--CoA ligase [ADP-forming] subunit beta from Glaesserella parasuis serovar 5 (strain SH0165) (Haemophilus parasuis).